Consider the following 92-residue polypeptide: Putative transmembrane protein ORF92 (92 aa).

3 helical membrane-spanning segments follow: residues 11-28 (FVKGIVLLALTSGATYAI), 32-52 (FFSSNYCAIARIIQALLLFAS), and 54-74 (FLFDSAGALILGVIVLIIGVG).

It localises to the host membrane. The chain is Putative transmembrane protein ORF92 from Acidianus convivator (ABV).